The sequence spans 375 residues: Citrate synthase (375 aa).

Residues H266 and D317 contribute to the active site.

The protein belongs to the citrate synthase family. In terms of assembly, homohexamer.

It carries out the reaction oxaloacetate + acetyl-CoA + H2O = citrate + CoA + H(+). Its pathway is carbohydrate metabolism; tricarboxylic acid cycle; isocitrate from oxaloacetate: step 1/2. With respect to regulation, allosterically inhibited by NADH. The protein is Citrate synthase (gltA) of Mycolicibacterium smegmatis (Mycobacterium smegmatis).